Here is a 152-residue protein sequence, read N- to C-terminus: Small ribosomal subunit protein uS15 (152 aa).

Positions 1-20 (MNKRRANGSSHSTRPVRTGS) are disordered.

It belongs to the universal ribosomal protein uS15 family. Part of the 30S ribosomal subunit.

The polypeptide is Small ribosomal subunit protein uS15 (Metallosphaera sedula (strain ATCC 51363 / DSM 5348 / JCM 9185 / NBRC 15509 / TH2)).